The following is a 554-amino-acid chain: Glucose-6-phosphate isomerase (554 aa).

E359 serves as the catalytic Proton donor. Active-site residues include H390 and K518.

The protein belongs to the GPI family.

Its subcellular location is the cytoplasm. The enzyme catalyses alpha-D-glucose 6-phosphate = beta-D-fructose 6-phosphate. The protein operates within carbohydrate biosynthesis; gluconeogenesis. It participates in carbohydrate degradation; glycolysis; D-glyceraldehyde 3-phosphate and glycerone phosphate from D-glucose: step 2/4. In terms of biological role, catalyzes the reversible isomerization of glucose-6-phosphate to fructose-6-phosphate. The chain is Glucose-6-phosphate isomerase from Pseudomonas savastanoi pv. phaseolicola (strain 1448A / Race 6) (Pseudomonas syringae pv. phaseolicola (strain 1448A / Race 6)).